A 57-amino-acid chain; its full sequence is Exactin (57 aa).

Intrachain disulfides connect Cys3/Cys19, Cys12/Cys37, Cys41/Cys49, and Cys50/Cys55.

Belongs to the three-finger toxin family. Short-chain subfamily. Orphan group XX sub-subfamily. As to expression, expressed by the venom gland.

Its subcellular location is the secreted. In terms of biological role, anticoagulant protein that prevents the activation of factor X (F10). It acts by potently inhibiting the extrinsic tenase complex (ETC) (IC(50)=116.49 nM), a complex composed by active factor VII (F7a), tissue factor (TF) and F10. In addition, it shows weaker activities on other complexes. It weakly inhibits F10 activation by inhibiting the intrinsic tenase complex (IC(50)=4.05 uM), a complex composed by active factor IX (IXa, F9a), its cofactor factor VIII (VIIIa, F8a), and their substrate F10. It also weakly prevents prothrombin activation by inhibiting the prothrombinase complex (IC(50)=17.66 uM). It shows high kinetic constant towards F7a/TF/F10/phospholipids complex (Ki=30.62 nM) and lower kinetic constant towards F7a/TF/phospholipids complex (Ki=153.75 nM). The sequence is that of Exactin from Hemachatus haemachatus (Rinkhals).